A 274-amino-acid polypeptide reads, in one-letter code: Probable cyclic nucleotide phosphodiesterase RPA0124 (274 aa).

Fe cation is bound by residues Asp-8, His-10, Asp-49, Asn-79, His-155, His-194, and His-196. Residues His-10, Asp-49, and Asn-79–His-80 contribute to the AMP site. His-196 is a binding site for AMP.

This sequence belongs to the cyclic nucleotide phosphodiesterase class-III family. Fe(2+) is required as a cofactor.

This is Probable cyclic nucleotide phosphodiesterase RPA0124 from Rhodopseudomonas palustris (strain ATCC BAA-98 / CGA009).